Consider the following 680-residue polypeptide: Lipase 1 (680 aa).

An N-terminal signal peptide occupies residues 1-34; that stretch reads MKSQNKYSIRKFSVGASSILIATLLFLSGGQAQA. The propeptide occupies 35–290; sequence AEKQVNMGNS…AKAKDDQTNK (256 aa). Residues 82–259 are disordered; it reads KNLHNDKTIS…PTKDNDKKNG (178 aa). Basic and acidic residues predominate over residues 84-111; it reads LHNDKTISEENHRKTDDLNKDQLKDDKN. 3 stretches are compositionally biased toward polar residues: residues 125–138, 162–193, and 204–223; these read KNNNANPSDVNQGL, SQDSNANNNLPSQSLTKEAPSLNKSDQTSQRE, and QPQQNNQANDKITNHNFNNE. The span at 224-234 shows a compositional bias: basic and acidic residues; it reads QEVKPQKDEKT. Over residues 235–246 the composition is skewed to polar residues; the sequence is LSVSDLKNNQKS. Serine 408 (nucleophile) is an active-site residue. The active-site Charge relay system is the aspartate 600. Aspartate 638 is a binding site for Ca(2+). Histidine 639 acts as the Charge relay system in catalysis. Residues aspartate 641, aspartate 646, and aspartate 649 each contribute to the Ca(2+) site.

Belongs to the AB hydrolase superfamily. Lipase family.

It localises to the secreted. The catalysed reaction is a triacylglycerol + H2O = a diacylglycerol + a fatty acid + H(+). This Staphylococcus aureus (strain Mu50 / ATCC 700699) protein is Lipase 1 (lip1).